The primary structure comprises 87 residues: Phosphoribosyl-ATP pyrophosphatase (87 aa).

It belongs to the PRA-PH family.

The protein localises to the cytoplasm. It catalyses the reaction 1-(5-phospho-beta-D-ribosyl)-ATP + H2O = 1-(5-phospho-beta-D-ribosyl)-5'-AMP + diphosphate + H(+). It functions in the pathway amino-acid biosynthesis; L-histidine biosynthesis; L-histidine from 5-phospho-alpha-D-ribose 1-diphosphate: step 2/9. The sequence is that of Phosphoribosyl-ATP pyrophosphatase from Nocardia farcinica (strain IFM 10152).